The following is a 416-amino-acid chain: Enterobactin exporter EntS (416 aa).

The Cytoplasmic segment spans residues 1–21 (MNKQSWLLNLSLLKTHPAFRA). A helical membrane pass occupies residues 22-42 (VFLARFISIVSLGLLGVAVPV). The Periplasmic portion of the chain corresponds to 43-55 (QIQMMTHSTWQVG). A helical membrane pass occupies residues 56–76 (LSVTLTGGAMFVGLMVGGVLA). The Cytoplasmic portion of the chain corresponds to 77–83 (DRYERKK). Residues 84-104 (VILLARGTCGIGFIGLCLNAL) form a helical membrane-spanning segment. The Periplasmic portion of the chain corresponds to 105 to 109 (LPEPS). A helical membrane pass occupies residues 110–130 (LLAIYLLGLWDGFFASLGVTA). Residues 131–156 (LLAATPALVGRENLMQAGAITMLTVR) are Cytoplasmic-facing. A helical transmembrane segment spans residues 157 to 177 (LGSVISPMIGGLLLATGGVAW). Residue Asn-178 is a topological domain, periplasmic. The helical transmembrane segment at 179-199 (YGLAAAGTFITLLPLLSLPAL) threads the bilayer. The Cytoplasmic segment spans residues 200–218 (PPPPQPREHPLKSLLAGFR). The helical transmembrane segment at 219–239 (FLLASPLVGGIALLGGLLTMA) threads the bilayer. Topologically, residues 240–256 (SAVRVLYPALADNWQMS) are periplasmic. The chain crosses the membrane as a helical span at residues 257–277 (AAQIGFLYAAIPLGAAIGALT). Topologically, residues 278 to 287 (SGKLAHSARP) are cytoplasmic. A helical membrane pass occupies residues 288–307 (GLLMLLSTLGSFLAIGLFGL). At 308–313 (MPMWIL) the chain is on the periplasmic side. The chain crosses the membrane as a helical span at residues 314 to 336 (GVVCLALFGWLSAVSSLLQYTML). Topologically, residues 337-356 (QTQTPEAMLGRINGLWTAQN) are cytoplasmic. A helical membrane pass occupies residues 357-377 (VTGDAIGAALLGGLGAMMTPV). A topological domain (periplasmic) is located at residue Ala-378. Residues 379-399 (SASASGFGLLIIGVLLLLVLV) form a helical membrane-spanning segment. At 400-416 (ELRRFRQTPPQMTASDS) the chain is on the cytoplasmic side.

The protein belongs to the major facilitator superfamily. EntS (TC 2.A.1.38) family.

The protein localises to the cell inner membrane. Its function is as follows. Component of an export pathway for enterobactin. This is Enterobactin exporter EntS from Escherichia coli O7:K1 (strain IAI39 / ExPEC).